The following is a 387-amino-acid chain: Queuine tRNA-ribosyltransferase (387 aa).

The active-site Proton acceptor is the Asp-93. Substrate is bound by residues 93–97 (DSGGF), Asp-147, Gln-190, and Gly-217. Residues 248–254 (GVGTPDD) are RNA binding. Asp-267 serves as the catalytic Nucleophile. Residues 272–276 (TRAGR) form an RNA binding; important for wobble base 34 recognition region. 4 residues coordinate Zn(2+): Cys-305, Cys-307, Cys-310, and His-336.

Belongs to the queuine tRNA-ribosyltransferase family. As to quaternary structure, homodimer. Within each dimer, one monomer is responsible for RNA recognition and catalysis, while the other monomer binds to the replacement base PreQ1. It depends on Zn(2+) as a cofactor.

It catalyses the reaction 7-aminomethyl-7-carbaguanine + guanosine(34) in tRNA = 7-aminomethyl-7-carbaguanosine(34) in tRNA + guanine. It participates in tRNA modification; tRNA-queuosine biosynthesis. Its function is as follows. Catalyzes the base-exchange of a guanine (G) residue with the queuine precursor 7-aminomethyl-7-deazaguanine (PreQ1) at position 34 (anticodon wobble position) in tRNAs with GU(N) anticodons (tRNA-Asp, -Asn, -His and -Tyr). Catalysis occurs through a double-displacement mechanism. The nucleophile active site attacks the C1' of nucleotide 34 to detach the guanine base from the RNA, forming a covalent enzyme-RNA intermediate. The proton acceptor active site deprotonates the incoming PreQ1, allowing a nucleophilic attack on the C1' of the ribose to form the product. After dissociation, two additional enzymatic reactions on the tRNA convert PreQ1 to queuine (Q), resulting in the hypermodified nucleoside queuosine (7-(((4,5-cis-dihydroxy-2-cyclopenten-1-yl)amino)methyl)-7-deazaguanosine). The sequence is that of Queuine tRNA-ribosyltransferase from Gluconacetobacter diazotrophicus (strain ATCC 49037 / DSM 5601 / CCUG 37298 / CIP 103539 / LMG 7603 / PAl5).